The following is a 115-amino-acid chain: Large ribosomal subunit protein bL19 (115 aa).

Belongs to the bacterial ribosomal protein bL19 family.

Functionally, this protein is located at the 30S-50S ribosomal subunit interface and may play a role in the structure and function of the aminoacyl-tRNA binding site. In Fervidobacterium nodosum (strain ATCC 35602 / DSM 5306 / Rt17-B1), this protein is Large ribosomal subunit protein bL19.